A 153-amino-acid chain; its full sequence is Endoribonuclease YbeY (153 aa).

Zn(2+)-binding residues include histidine 116, histidine 120, and histidine 126.

It belongs to the endoribonuclease YbeY family. Requires Zn(2+) as cofactor.

It is found in the cytoplasm. Single strand-specific metallo-endoribonuclease involved in late-stage 70S ribosome quality control and in maturation of the 3' terminus of the 16S rRNA. The chain is Endoribonuclease YbeY from Leifsonia xyli subsp. xyli (strain CTCB07).